The chain runs to 622 residues: Low affinity potassium transport system protein Kup (622 aa).

The next 12 helical transmembrane spans lie at 9–29 (LSAVTLAAIGVVYGDIGTSPL), 46–66 (PDVVFGFLSLIFWMLILVVSV), 101–121 (ILVVLGLIGGSFFYGEVVITP), 137–157 (PALDPYIVPCSIAVLTLLFVI), 165–185 (VGKLFAPVMLVWFLTLALLGL), 213–233 (VSFFALGAVVLAITGVEALYA), 247–267 (WFTVVLPSLVLNYFGQGALLL), 276–296 (PFFLLAPDWALIPLLILATLA), 337–357 (IYIPVINWTLYLAVVLVIIGF), 363–383 (LAAAYGIAVTGTMVITSILFC), 395–415 (FLVAFLLMVLLIIDIPMFSAN), and 416–436 (VLKLFSGGWLPLSLGLVMFII).

The protein belongs to the HAK/KUP transporter (TC 2.A.72) family.

It localises to the cell inner membrane. The catalysed reaction is K(+)(in) + H(+)(in) = K(+)(out) + H(+)(out). Its function is as follows. Responsible for the low-affinity transport of potassium into the cell. Likely operates as a K(+):H(+) symporter. In Yersinia pseudotuberculosis serotype O:1b (strain IP 31758), this protein is Low affinity potassium transport system protein Kup.